A 1621-amino-acid chain; its full sequence is Nestin (1621 aa).

N-acetylmethionine is present on M1. A head region spans residues 1-7; that stretch reads MEGCMGE. Residues 8 to 43 are coil 1A; that stretch reads ESFQMWELNRRLEAYLARVKALEEQNELLSAELGGL. Residues 8 to 313 enclose the IF rod domain; that stretch reads ESFQMWELNR…TLLEAENSRL (306 aa). Residues 44–55 are linker 1; the sequence is RAQSADTSWRAH. Positions 56–151 are coil 1B; sequence ADDELAALRA…VAHEEERVGL (96 aa). The interval 152-173 is linker 12; that stretch reads NAQAACAPRCPAPPRGPPAPAP. A coil 2A region spans residues 174-192; it reads EVEELARRLGEAWRGAVRG. A linker 2 region spans residues 193–195; the sequence is YQE. Residues 196-313 are coil 2B; that stretch reads RVAHMETSLG…TLLEAENSRL (118 aa). Position 311 is a phosphoserine (S311). Positions 314-1621 are tail; the sequence is QTPGGGSKTS…DRESWSSGED (1308 aa). At T315 the chain carries Phosphothreonine. At S325 the chain carries Phosphoserine. A Phosphothreonine modification is found at T338. S355 and S358 each carry phosphoserine. The residue at position 388 (T388) is a Phosphothreonine. Phosphoserine occurs at positions 398, 471, 476, 548, 564, 578, 588, 638, 680, 702, 746, and 768. Positions 439–490 are disordered; it reads SVLPGPEEPGGQRQEASTGQSPEDHASLAPPLSPDHSSLEAKDGESGGSRVF. The disordered stretch occupies residues 670 to 788; the sequence is LEKENQEPLR…PPEKVDLEPL (119 aa). 3 stretches are compositionally biased toward basic and acidic residues: residues 687 to 725, 736 to 770, and 779 to 788; these read EALR…LKTL, LETE…RSLG, and PPEKVDLEPL. S790 bears the Phosphoserine mark. A Glycyl lysine isopeptide (Lys-Gly) (interchain with G-Cter in SUMO1); alternate cross-link involves residue K811. Residue K811 forms a Glycyl lysine isopeptide (Lys-Gly) (interchain with G-Cter in SUMO2); alternate linkage. S820, S831, and S842 each carry phosphoserine. T851 is subject to Phosphothreonine. S894, S905, S913, and S934 each carry phosphoserine. Residues 895–1593 form a disordered region; sequence LGAWNLENLR…GSALKTSWAG (699 aa). Composition is skewed to basic and acidic residues over residues 904–936, 949–960, 980–994, and 1012–1024; these read RSPE…RSLE, QRWEDTVEKDQE, LNLR…KEEV, and GHPE…EQRG. At S1016 the chain carries Phosphoserine. The segment covering 1085–1098 has biased composition (low complexity); the sequence is GSEPAMGESAAGAE. Over residues 1099–1110 the composition is skewed to gly residues; that stretch reads PGPGQGVGGLGD. 2 stretches are compositionally biased toward basic and acidic residues: residues 1129-1145 and 1159-1184; these read LEAK…KDLE and GKSR…RGAE. Phosphoserine is present on residues S1261, S1282, S1286, S1310, S1347, S1409, S1418, and S1452. The segment covering 1275-1292 has biased composition (acidic residues); it reads PQEEGEESREESEEDELG. The span at 1409 to 1428 shows a compositional bias: acidic residues; the sequence is SDGFADEEESGEEGEEDQEE. Composition is skewed to low complexity over residues 1440–1453 and 1460–1470; these read GSSV…SSSQ and SDSVSVSVPWD. Over residues 1486-1495 the composition is skewed to polar residues; it reads ETESQDSAEP. S1496, S1498, S1577, S1617, and S1618 each carry phosphoserine.

It belongs to the intermediate filament family. In terms of assembly, forms homodimers and homotetramers in vitro. In mixtures with other intermediate filament proteins such as vimentin and alpha-internexin, tis protein preferentially forms heterodimers which can assemble to form intermediate filaments if nestin does not exceed 25%. Interacts with FHOD3. In terms of processing, constitutively phosphorylated. This increases during mitosis when the cytoplasmic intermediate filament network is reorganized. In terms of tissue distribution, CNS stem cells.

Required for brain and eye development. Promotes the disassembly of phosphorylated vimentin intermediate filaments (IF) during mitosis and may play a role in the trafficking and distribution of IF proteins and other cellular factors to daughter cells during progenitor cell division. Required for survival, renewal and mitogen-stimulated proliferation of neural progenitor cells. The polypeptide is Nestin (NES) (Homo sapiens (Human)).